Reading from the N-terminus, the 203-residue chain is Glycerol-3-phosphate acyltransferase (203 aa).

A run of 5 helical transmembrane segments spans residues Leu-2–Val-22, Cys-54–Leu-74, Ala-80–Phe-100, Leu-114–Ile-134, and Thr-153–Phe-173.

Belongs to the PlsY family. As to quaternary structure, probably interacts with PlsX.

Its subcellular location is the cell inner membrane. The enzyme catalyses an acyl phosphate + sn-glycerol 3-phosphate = a 1-acyl-sn-glycero-3-phosphate + phosphate. It functions in the pathway lipid metabolism; phospholipid metabolism. Functionally, catalyzes the transfer of an acyl group from acyl-phosphate (acyl-PO(4)) to glycerol-3-phosphate (G3P) to form lysophosphatidic acid (LPA). This enzyme utilizes acyl-phosphate as fatty acyl donor, but not acyl-CoA or acyl-ACP. The sequence is that of Glycerol-3-phosphate acyltransferase from Pseudoalteromonas translucida (strain TAC 125).